Reading from the N-terminus, the 262-residue chain is tRNA pseudouridine synthase A (262 aa).

The active-site Nucleophile is the aspartate 51. Tyrosine 106 is a binding site for substrate.

Belongs to the tRNA pseudouridine synthase TruA family.

It carries out the reaction uridine(38/39/40) in tRNA = pseudouridine(38/39/40) in tRNA. Functionally, formation of pseudouridine at positions 38, 39 and 40 in the anticodon stem and loop of transfer RNAs. This chain is tRNA pseudouridine synthase A, found in Pyrococcus horikoshii (strain ATCC 700860 / DSM 12428 / JCM 9974 / NBRC 100139 / OT-3).